A 638-amino-acid polypeptide reads, in one-letter code: 1-deoxy-D-xylulose-5-phosphate synthase (638 aa).

Residues His-79 and 120-122 (GHS) contribute to the thiamine diphosphate site. Asp-151 serves as a coordination point for Mg(2+). Residues 152–153 (GA), Asn-182, Tyr-291, and Glu-373 each bind thiamine diphosphate. Position 182 (Asn-182) interacts with Mg(2+).

The protein belongs to the transketolase family. DXPS subfamily. In terms of assembly, homodimer. Requires Mg(2+) as cofactor. It depends on thiamine diphosphate as a cofactor.

It catalyses the reaction D-glyceraldehyde 3-phosphate + pyruvate + H(+) = 1-deoxy-D-xylulose 5-phosphate + CO2. The protein operates within metabolic intermediate biosynthesis; 1-deoxy-D-xylulose 5-phosphate biosynthesis; 1-deoxy-D-xylulose 5-phosphate from D-glyceraldehyde 3-phosphate and pyruvate: step 1/1. Functionally, catalyzes the acyloin condensation reaction between C atoms 2 and 3 of pyruvate and glyceraldehyde 3-phosphate to yield 1-deoxy-D-xylulose-5-phosphate (DXP). The chain is 1-deoxy-D-xylulose-5-phosphate synthase from Xanthomonas campestris pv. campestris (strain 8004).